Reading from the N-terminus, the 419-residue chain is MRKIIINGGKALSGEVAVSGAKNSVVALIPAIILADDIVILDGVPAISDVDSLIEIMELMGATVNYHGDTLEIDPRGVQDIPMPYGKINSLRASYYFYGSLLGRFGQAVVGLPGGCDLGPRPIDLHLKAFEAMGVEVSYEGENMNLSTNGQKIHGAHIYMDTVSVGATINTMVAATKAQGKTVIENAAREPEIIDVATLLNNMGAHIRGAGTDIITIQGVQKLHGTRHQVIPDRIEAGTYIALAAAIGKGVKITNVLYEHLESFIAKLEEMGVRMTVEEDAIFVEKQESLKAITIKTSPYPGFATDLQQPLTPLLLKADGRGTIIDTIYEKRINHVPELMRMGADISVIGGQIVYQGPSRLTGAQVKATDLRAGAALVTAGLMAEGKTEITNIEFILRGYASIIAKLTALGADIQLIED.

22–23 lines the phosphoenolpyruvate pocket; it reads KN. Arg-92 contributes to the UDP-N-acetyl-alpha-D-glucosamine binding site. The active-site Proton donor is the Cys-116. Cys-116 is modified (2-(S-cysteinyl)pyruvic acid O-phosphothioketal). Residues 121–125, Asp-306, and Ile-328 each bind UDP-N-acetyl-alpha-D-glucosamine; that span reads RPIDL.

The protein belongs to the EPSP synthase family. MurA subfamily.

It is found in the cytoplasm. The enzyme catalyses phosphoenolpyruvate + UDP-N-acetyl-alpha-D-glucosamine = UDP-N-acetyl-3-O-(1-carboxyvinyl)-alpha-D-glucosamine + phosphate. The protein operates within cell wall biogenesis; peptidoglycan biosynthesis. Cell wall formation. Adds enolpyruvyl to UDP-N-acetylglucosamine. The protein is UDP-N-acetylglucosamine 1-carboxyvinyltransferase 2 of Streptococcus pyogenes serotype M3 (strain ATCC BAA-595 / MGAS315).